A 195-amino-acid polypeptide reads, in one-letter code: SXP/RAL-2-like protein 2 (195 aa).

The interval 162–195 (EKVHGGSHGGLRGGPGGPRDGPRGGPRGGPRGGR) is disordered. Residues 167 to 195 (GSHGGLRGGPGGPRDGPRGGPRGGPRGGR) show a composition bias toward gly residues.

This sequence belongs to the SXP/RAL-2 family.

This chain is SXP/RAL-2-like protein 2, found in Caenorhabditis elegans.